A 547-amino-acid chain; its full sequence is Mercuric reductase (547 aa).

Residues 4-67 (NSYKIPIQGM…NISAAGYQPG (64 aa)) form the HMA domain. A metal cation contacts are provided by C15 and C18. FAD contacts are provided by A97, G117, and T122. C123 and C128 are oxidised to a cystine. The FAD site is built by K132, A196, D388, and V396. Residues C544 and C545 each coordinate Hg(2+).

Belongs to the class-I pyridine nucleotide-disulfide oxidoreductase family. As to quaternary structure, homodimer. FAD serves as cofactor.

The enzyme catalyses Hg + NADP(+) + H(+) = Hg(2+) + NADPH. Functionally, resistance to Hg(2+) in bacteria appears to be governed by a specialized system which includes mercuric reductase. MerA protein is responsible for volatilizing mercury as Hg(0). The sequence is that of Mercuric reductase (merA) from Staphylococcus aureus.